Reading from the N-terminus, the 414-residue chain is 3-ketoacyl-CoA thiolase, peroxisomal (414 aa).

A peroxisome-targeting transit peptide spans methionine 1–threonine 9. Residues methionine 1–threonine 9 are PTS2-type peroxisomal targeting signal. The Acyl-thioester intermediate role is filled by cysteine 115. Catalysis depends on proton acceptor residues histidine 370 and cysteine 400.

The protein belongs to the thiolase-like superfamily. Thiolase family. Homodimer. Interacts (via PTS2-type peroxisomal targeting signal region) with PEX7; leading to its translocation into peroxisomes.

It is found in the peroxisome. It carries out the reaction an acyl-CoA + acetyl-CoA = a 3-oxoacyl-CoA + CoA. The protein operates within lipid metabolism; fatty acid metabolism. Responsible for the thiolytic cleavage of straight chain 3-keto fatty acyl-CoAs (3-oxoacyl-CoAs). The chain is 3-ketoacyl-CoA thiolase, peroxisomal (POT1) from Yarrowia lipolytica (strain CLIB 122 / E 150) (Yeast).